We begin with the raw amino-acid sequence, 56 residues long: Turripeptide XIV-01 (56 aa).

The signal sequence occupies residues 1–21 (MRFHVLLTVALLLTSLMSIEA). Residues 22–30 (KPVNGAEME) constitute a propeptide that is removed on maturation.

Post-translationally, contains 2 disulfide bonds. Expressed by the venom duct.

The protein resides in the secreted. This Gemmula speciosa (Splendid gem-turris) protein is Turripeptide XIV-01.